We begin with the raw amino-acid sequence, 320 residues long: tRNA U34 carboxymethyltransferase (320 aa).

Residues K89, W103, K108, G128, 150–152 (DPT), 179–180 (LE), M194, Y198, and R313 contribute to the carboxy-S-adenosyl-L-methionine site.

It belongs to the class I-like SAM-binding methyltransferase superfamily. CmoB family. As to quaternary structure, homotetramer.

It carries out the reaction carboxy-S-adenosyl-L-methionine + 5-hydroxyuridine(34) in tRNA = 5-carboxymethoxyuridine(34) in tRNA + S-adenosyl-L-homocysteine + H(+). Catalyzes carboxymethyl transfer from carboxy-S-adenosyl-L-methionine (Cx-SAM) to 5-hydroxyuridine (ho5U) to form 5-carboxymethoxyuridine (cmo5U) at position 34 in tRNAs. This is tRNA U34 carboxymethyltransferase from Haemophilus ducreyi (strain 35000HP / ATCC 700724).